An 895-amino-acid polypeptide reads, in one-letter code: Transcription factor SWI6 (895 aa).

Over residues 1-45 (MASTVAGNSFVSQQHPGNLHSANLQSQSQGFRRQNSTSSVPSTAS) the composition is skewed to polar residues. Positions 1–107 (MASTVAGNSF…SDQNVPQQPQ (107 aa)) are disordered. A compositionally biased stretch (low complexity) spans 64–100 (MSSQQSQPPASQQSFSMSQTGSQPQPSQSSFRSYSDQ). The HTH APSES-type domain maps to 112–219 (IYTAVYSNVE…NRNPDGSVSQ (108 aa)). Residues 143–164 (ATQILKVAGVEKGKRTKILEKE) constitute a DNA-binding region (H-T-H motif). Disordered regions lie at residues 272-293 (ARFD…SFQR) and 323-358 (NMAF…NSFG). 2 ANK repeats span residues 458–488 (QCHT…PFRV) and 607–636 (AGDT…SPHI). A disordered region spans residues 653-684 (SDGAMKTKGDSGGDVENGDVGGSSQKSNESSN). The segment covering 674–684 (GSSQKSNESSN) has biased composition (polar residues). Residues 698 to 759 (SANFQEEIKN…VTNLQRAEER (62 aa)) adopt a coiled-coil conformation.

The protein localises to the nucleus. Its function is as follows. Transcription factor that plays a role downstream of the MCK1-MKK2-MPS1 cascade. Required for hyphal morphogenesis and pathogenicity. Is an important oxidative stress response regulator and plays a positive role in the regulation of extracellular peroxidases. The chain is Transcription factor SWI6 from Pyricularia oryzae (strain 70-15 / ATCC MYA-4617 / FGSC 8958) (Rice blast fungus).